The primary structure comprises 1692 residues: Cullin-7 (1692 aa).

Residues 348–421 enclose the CPH domain; it reads RTAFASVNTY…HWHMLEILGF (74 aa). Positions 791-970 constitute a DOC domain; the sequence is PIQIPFFDVF…HTRLFYMVRA (180 aa). The segment covering 1319 to 1335 has biased composition (basic and acidic residues); that stretch reads VAHEDSGKEHKSKKEDA. The disordered stretch occupies residues 1319–1374; that stretch reads VAHEDSGKEHKSKKEDAAGETAAVAMADEEEEEGKKEEGEEEEGEGEEELEEEEER. Acidic residues predominate over residues 1357–1374; sequence GEEEEGEGEEELEEEEER. Lys-1570 participates in a covalent cross-link: Glycyl lysine isopeptide (Lys-Gly) (interchain with G-Cter in NEDD8).

It belongs to the cullin family. Component of the 3M complex, composed of core components CUL7, CCDC8 and OBSL1. Component of the Cul7-RING(FBXW8) complex consisting of CUL7, RBX1, SKP1 and FBXW8. Within the Cul7-RING(FBXW8) complex interacts with FBXW8 and RBX1, but not with SKP1. Interacts with CUL1 (via the C-terminal domain); the interaction seems to be mediated by FBXW8; it is likely specific to FBXW8, but not other F-box proteins. Interacts (via the CPH domain) with p53/TP53; the interaction preferentially involves tetrameric and dimeric p53/TP53; this interaction recruits p53/TP53 for ubiquitination by neddylated CUL1-RBX1. The CUL7-CUL9 heterodimer seems to interact specifically with p53/TP53. Interacts with FBXW8; interaction is mutually exclusive of binding to CUL9 or p53/TP53. Interacts with CUL9; leading to inhibited CUL9 activity. Interacts with OBSL1. Interacts (as part of the 3M complex) with HDAC4 and HDAC5; it is negatively regulated by ANKRA2.

It is found in the cytoplasm. Its subcellular location is the cytoskeleton. The protein resides in the microtubule organizing center. The protein localises to the centrosome. It localises to the perinuclear region. It is found in the golgi apparatus. It functions in the pathway protein modification; protein ubiquitination. Its function is as follows. Core component of the 3M and Cul7-RING(FBXW8) complexes, which mediate the ubiquitination and subsequent proteasomal degradation of target proteins. Core component of the 3M complex, a complex required to regulate microtubule dynamics and genome integrity. It is unclear how the 3M complex regulates microtubules, it could act by controlling the level of a microtubule stabilizer. The Cul7-RING(FBXW8) complex alone lacks ubiquitination activity and does not promote polyubiquitination and proteasomal degradation of p53/TP53. However it mediates recruitment of p53/TP53 for ubiquitination by neddylated CUL1-RBX1. Interaction with CUL9 is required to inhibit CUL9 activity and ubiquitination of BIRC5. The Cul7-RING(FBXW8) complex also mediates ubiquitination and consequent degradation of target proteins such as GORASP1, IRS1 and MAP4K1/HPK1. Ubiquitination of GORASP1 regulates Golgi morphogenesis and dendrite patterning in brain. Mediates ubiquitination and degradation of IRS1 in a mTOR-dependent manner: the Cul7-RING(FBXW8) complex recognizes and binds IRS1 previously phosphorylated by S6 kinase (RPS6KB1 or RPS6KB2). The Cul7-RING(FBXW8) complex also mediates ubiquitination of MAP4K1/HPK1: recognizes and binds autophosphorylated MAP4K1/HPK1, leading to its degradation, thereby affecting cell proliferation and differentiation. Acts as a regulator in trophoblast cell epithelial-mesenchymal transition and placental development. While the Cul7-RING(FBXW8) and the 3M complexes are associated and involved in common processes, CUL7 and the Cul7-RING(FBXW8) complex may have additional functions. Probably plays a role in the degradation of proteins involved in endothelial proliferation and/or differentiation. The protein is Cullin-7 (Cul7) of Rattus norvegicus (Rat).